The primary structure comprises 1690 residues: DNA-directed RNA polymerase subunit beta' (1690 aa).

Residues cysteine 63, cysteine 65, cysteine 78, and cysteine 81 each contribute to the Zn(2+) site. Mg(2+)-binding residues include aspartate 753, aspartate 755, and aspartate 757. 4 residues coordinate Zn(2+): cysteine 1107, cysteine 1295, cysteine 1302, and cysteine 1305.

It belongs to the RNA polymerase beta' chain family. As to quaternary structure, the RNAP catalytic core consists of 2 alpha, 1 beta, 1 beta' and 1 omega subunit. When a sigma factor is associated with the core the holoenzyme is formed, which can initiate transcription. The cofactor is Mg(2+). It depends on Zn(2+) as a cofactor.

The catalysed reaction is RNA(n) + a ribonucleoside 5'-triphosphate = RNA(n+1) + diphosphate. In terms of biological role, DNA-dependent RNA polymerase catalyzes the transcription of DNA into RNA using the four ribonucleoside triphosphates as substrates. The polypeptide is DNA-directed RNA polymerase subunit beta' (Thermotoga sp. (strain RQ2)).